The sequence spans 315 residues: Porphobilinogen deaminase (315 aa).

Residue Cys-242 is modified to S-(dipyrrolylmethanemethyl)cysteine.

The protein belongs to the HMBS family. In terms of assembly, monomer. Requires dipyrromethane as cofactor.

The catalysed reaction is 4 porphobilinogen + H2O = hydroxymethylbilane + 4 NH4(+). It participates in porphyrin-containing compound metabolism; protoporphyrin-IX biosynthesis; coproporphyrinogen-III from 5-aminolevulinate: step 2/4. Functionally, tetrapolymerization of the monopyrrole PBG into the hydroxymethylbilane pre-uroporphyrinogen in several discrete steps. The chain is Porphobilinogen deaminase from Syntrophotalea carbinolica (strain DSM 2380 / NBRC 103641 / GraBd1) (Pelobacter carbinolicus).